Here is a 406-residue protein sequence, read N- to C-terminus: 3-oxoacyl-[acyl-carrier-protein] synthase 1 (406 aa).

Positions 1–405 constitute a Ketosynthase family 3 (KS3) domain; it reads MRRVVITGIG…GTNVSLIVKK (405 aa). Residues C164, H299, and H335 each act as for beta-ketoacyl synthase activity in the active site.

The protein belongs to the thiolase-like superfamily. Beta-ketoacyl-ACP synthases family. Homodimer.

It is found in the cytoplasm. The enzyme catalyses a fatty acyl-[ACP] + malonyl-[ACP] + H(+) = a 3-oxoacyl-[ACP] + holo-[ACP] + CO2. The catalysed reaction is (3Z)-decenoyl-[ACP] + malonyl-[ACP] + H(+) = 3-oxo-(5Z)-dodecenoyl-[ACP] + holo-[ACP] + CO2. It participates in lipid metabolism; fatty acid biosynthesis. In terms of biological role, involved in the type II fatty acid elongation cycle. Catalyzes the elongation of a wide range of acyl-ACP by the addition of two carbons from malonyl-ACP to an acyl acceptor. Can also use unsaturated fatty acids. Catalyzes a key reaction in unsaturated fatty acid (UFA) synthesis, the elongation of the cis-3-decenoyl-ACP produced by FabA. The protein is 3-oxoacyl-[acyl-carrier-protein] synthase 1 (fabB) of Buchnera aphidicola subsp. Acyrthosiphon pisum (strain APS) (Acyrthosiphon pisum symbiotic bacterium).